Here is a 57-residue protein sequence, read N- to C-terminus: Ribosome modulation factor 2 (57 aa).

The segment at 1–24 (MKRQKRDKLGRAHSNGYQAGLGGK) is disordered.

It belongs to the ribosome modulation factor family.

The protein localises to the cytoplasm. Its function is as follows. During stationary phase, converts 70S ribosomes to an inactive dimeric form (100S ribosomes). The protein is Ribosome modulation factor 2 of Colwellia psychrerythraea (strain 34H / ATCC BAA-681) (Vibrio psychroerythus).